The primary structure comprises 379 residues: Homoserine O-succinyltransferase (379 aa).

In terms of domain architecture, AB hydrolase-1 spans 51-360 (NAVLICHALS…DAPQGHDAFL (310 aa)). Catalysis depends on serine 157, which acts as the Nucleophile. Residue arginine 227 participates in substrate binding. Residues aspartate 323 and histidine 356 contribute to the active site. Aspartate 357 is a binding site for substrate.

The protein belongs to the AB hydrolase superfamily. MetX family. As to quaternary structure, homodimer.

It is found in the cytoplasm. The catalysed reaction is L-homoserine + succinyl-CoA = O-succinyl-L-homoserine + CoA. It participates in amino-acid biosynthesis; L-methionine biosynthesis via de novo pathway; O-succinyl-L-homoserine from L-homoserine: step 1/1. Its activity is regulated as follows. Requires MetW for activity. In terms of biological role, transfers a succinyl group from succinyl-CoA to L-homoserine, forming succinyl-L-homoserine. The chain is Homoserine O-succinyltransferase from Pseudomonas syringae pv. syringae (strain B728a).